A 467-amino-acid polypeptide reads, in one-letter code: Probable serine hydroxymethyltransferase, cytosolic (467 aa).

Lysine 243 carries the N6-(pyridoxal phosphate)lysine modification.

This sequence belongs to the SHMT family. As to quaternary structure, homotetramer. The cofactor is pyridoxal 5'-phosphate.

The protein localises to the cytoplasm. It catalyses the reaction (6R)-5,10-methylene-5,6,7,8-tetrahydrofolate + glycine + H2O = (6S)-5,6,7,8-tetrahydrofolate + L-serine. The protein operates within one-carbon metabolism; tetrahydrofolate interconversion. Functionally, interconversion of serine and glycine. In Schizosaccharomyces pombe (strain 972 / ATCC 24843) (Fission yeast), this protein is Probable serine hydroxymethyltransferase, cytosolic.